The chain runs to 50 residues: U23-theraphotoxin-Cg1a 2 (50 aa).

Intrachain disulfides connect cysteine 22–cysteine 36, cysteine 29–cysteine 41, and cysteine 35–cysteine 47.

Belongs to the neurotoxin 10 (Hwtx-1) family. 64 (Jztx-20) subfamily. In terms of tissue distribution, expressed by the venom gland.

The protein localises to the secreted. Its function is as follows. Probable ion channel inhibitor. This is U23-theraphotoxin-Cg1a 2 from Chilobrachys guangxiensis (Chinese earth tiger tarantula).